A 209-amino-acid polypeptide reads, in one-letter code: Thymidylate kinase (209 aa).

10–17 (GIDGCGKT) is an ATP binding site.

This sequence belongs to the thymidylate kinase family.

It catalyses the reaction dTMP + ATP = dTDP + ADP. In terms of biological role, phosphorylation of dTMP to form dTDP in both de novo and salvage pathways of dTTP synthesis. This Synechococcus sp. (strain CC9605) protein is Thymidylate kinase.